The chain runs to 305 residues: tRNA uridine(34) hydroxylase (305 aa).

A Rhodanese domain is found at 130–228; it reads DDPDTLVIDT…YLGEIPEQES (99 aa). Cys-188 functions as the Cysteine persulfide intermediate in the catalytic mechanism.

Belongs to the TrhO family.

The catalysed reaction is uridine(34) in tRNA + AH2 + O2 = 5-hydroxyuridine(34) in tRNA + A + H2O. Its function is as follows. Catalyzes oxygen-dependent 5-hydroxyuridine (ho5U) modification at position 34 in tRNAs. This chain is tRNA uridine(34) hydroxylase, found in Synechococcus sp. (strain CC9902).